The following is a 100-amino-acid chain: NADH-quinone oxidoreductase subunit K (100 aa).

3 helical membrane passes run 3-23 (PTAY…IGVL), 29-49 (IMIF…LVAF), and 63-83 (FIVM…IVAI).

The protein belongs to the complex I subunit 4L family. As to quaternary structure, NDH-1 is composed of 15 different subunits. Subunits NuoA, H, J, K, L, M, N constitute the membrane sector of the complex.

The protein localises to the cell membrane. It carries out the reaction a quinone + NADH + 5 H(+)(in) = a quinol + NAD(+) + 4 H(+)(out). Functionally, NDH-1 shuttles electrons from NADH, via FMN and iron-sulfur (Fe-S) centers, to quinones in the respiratory chain. The immediate electron acceptor for the enzyme in this species is believed to be a menaquinone. Couples the redox reaction to proton translocation (for every two electrons transferred, four hydrogen ions are translocated across the cytoplasmic membrane), and thus conserves the redox energy in a proton gradient. This is NADH-quinone oxidoreductase subunit K from Deinococcus geothermalis (strain DSM 11300 / CIP 105573 / AG-3a).